The primary structure comprises 502 residues: Probable cytosol aminopeptidase (502 aa).

Residues Lys269 and Asp274 each coordinate Mn(2+). Residue Lys281 is part of the active site. 3 residues coordinate Mn(2+): Asp292, Asp351, and Glu353. The active site involves Arg355.

This sequence belongs to the peptidase M17 family. The cofactor is Mn(2+).

Its subcellular location is the cytoplasm. The catalysed reaction is Release of an N-terminal amino acid, Xaa-|-Yaa-, in which Xaa is preferably Leu, but may be other amino acids including Pro although not Arg or Lys, and Yaa may be Pro. Amino acid amides and methyl esters are also readily hydrolyzed, but rates on arylamides are exceedingly low.. It carries out the reaction Release of an N-terminal amino acid, preferentially leucine, but not glutamic or aspartic acids.. Functionally, presumably involved in the processing and regular turnover of intracellular proteins. Catalyzes the removal of unsubstituted N-terminal amino acids from various peptides. The chain is Probable cytosol aminopeptidase from Shewanella piezotolerans (strain WP3 / JCM 13877).